The following is a 106-amino-acid chain: Protein aveugle (106 aa).

The region spanning 26–91 (WTVSDVLKWY…WREIVKQRLK (66 aa)) is the SAM domain.

As to quaternary structure, interacts with the SAM domain of cnk.

Its subcellular location is the cytoplasm. The protein resides in the membrane. In terms of biological role, required for normal photoreceptor differentiation between Ras and Raf for EGFR signaling in the eye and for mitogen-activated protein kinase phosphorylation. Probably acts together with Cnk to promote Raf activation, perhaps by recruiting an activating kinase. The chain is Protein aveugle (ave) from Drosophila melanogaster (Fruit fly).